The following is a 798-amino-acid chain: Phenylalanine--tRNA ligase beta subunit (798 aa).

One can recognise a tRNA-binding domain in the interval A39 to I147. One can recognise a B5 domain in the interval D404–G475. Residues D453, D459, E462, and E463 each contribute to the Mg(2+) site. The FDX-ACB domain occupies R704–R797.

This sequence belongs to the phenylalanyl-tRNA synthetase beta subunit family. Type 1 subfamily. Tetramer of two alpha and two beta subunits. Requires Mg(2+) as cofactor.

The protein resides in the cytoplasm. It carries out the reaction tRNA(Phe) + L-phenylalanine + ATP = L-phenylalanyl-tRNA(Phe) + AMP + diphosphate + H(+). This is Phenylalanine--tRNA ligase beta subunit from Ruegeria pomeroyi (strain ATCC 700808 / DSM 15171 / DSS-3) (Silicibacter pomeroyi).